The following is a 367-amino-acid chain: Undecaprenyl-phosphate alpha-N-acetylglucosaminyl 1-phosphate transferase (367 aa).

The next 9 membrane-spanning stretches (helical) occupy residues 3–23, 45–65, 69–89, 129–149, 158–178, 187–207, 213–233, 242–262, and 318–338; these read LLTA…FIFL, GVIP…MFGL, YIPH…VGAM, WELV…WAAI, IDGL…LILW, MWCF…LGIL, VFMG…LLLE, ISPV…VAIM, and VPEW…GYCI.

It belongs to the glycosyltransferase 4 family. WecA subfamily. Mg(2+) serves as cofactor. The cofactor is Mn(2+).

It is found in the cell inner membrane. The enzyme catalyses di-trans,octa-cis-undecaprenyl phosphate + UDP-N-acetyl-alpha-D-glucosamine = N-acetyl-alpha-D-glucosaminyl-di-trans,octa-cis-undecaprenyl diphosphate + UMP. It functions in the pathway bacterial outer membrane biogenesis; LPS O-antigen biosynthesis. Its pathway is bacterial outer membrane biogenesis; enterobacterial common antigen biosynthesis. In terms of biological role, catalyzes the transfer of the GlcNAc-1-phosphate moiety from UDP-GlcNAc onto the carrier lipid undecaprenyl phosphate (C55-P), yielding GlcNAc-pyrophosphoryl-undecaprenyl (GlcNAc-PP-C55). This chain is Undecaprenyl-phosphate alpha-N-acetylglucosaminyl 1-phosphate transferase, found in Salmonella typhi.